Reading from the N-terminus, the 419-residue chain is 3-isopropylmalate dehydratase large subunit (419 aa).

Positions 301, 361, and 364 each coordinate [4Fe-4S] cluster.

It belongs to the aconitase/IPM isomerase family. LeuC type 2 subfamily. In terms of assembly, heterodimer of LeuC and LeuD. It depends on [4Fe-4S] cluster as a cofactor.

It carries out the reaction (2R,3S)-3-isopropylmalate = (2S)-2-isopropylmalate. It participates in amino-acid biosynthesis; L-leucine biosynthesis; L-leucine from 3-methyl-2-oxobutanoate: step 2/4. In terms of biological role, catalyzes the isomerization between 2-isopropylmalate and 3-isopropylmalate, via the formation of 2-isopropylmaleate. The chain is 3-isopropylmalate dehydratase large subunit from Campylobacter hominis (strain ATCC BAA-381 / DSM 21671 / CCUG 45161 / LMG 19568 / NCTC 13146 / CH001A).